A 942-amino-acid chain; its full sequence is MAYHYSHDSDRRQPHGGYNYPSNYSNPSQYSIPDSVYSGHSTNTPRVPSPGGYHQQPSPTTRAVNPAYYQPQPTASSMTSHDLMYGRPSPGPNQYGAAPADVVRGPGATTVPLSQQAPYQPYPSHTDYSDEDKSFASTTHLVSPQKEWGVGSVVPVTTIPPVNQLPYQPYQAYPPRPSPSPITHRGGTSHWHAMRKQLLERRVIKQIPLHNGNLVMDVPVPKGVIPSTKGLGVMDGEMDSMRYSAATCDPDDFMGSKFSLRQYLYGRKTELFIVMTMYNENSELLLRTLNAVIKNIAHLTTRTRSKTWGPDSWKKVVVCIVADGRKVVDPRVLKVLQLMGVYAEGVMKDHVVDKETQAHIFEYTSQVVVSETGEVGFGSTPIQLLFCLKEQNKKKLNSHRWFFNAFGPLIKPNVCVLLDVGTKPSGHSIYELYKCFEKHPTVGGACGEIFADTGKWGKYLWNPLVAGQNFEYKMSNILDKPFESVFGLISVLPGAFSAYRYDAVANHADGTGPLAAYFRGELMNQPGATATIFDRNKFLAEDRILAFEIVVKKNARWRLQYVKAAKAGTDVPATVPEFISQRRRWLNGSIFAATYAMVCFWRIWTSGHGIFRKFTLTFLTIYNLFNLLFNWLSVSSFYLAFFFLISSSISGSSDPFNGAGDEIFQVFNKVYIALIFVVLVCSLGNRPQGSNYMYTFCIFMFAVCQGILLYCAGWTVYQTVPHTSEGWEDVSGLFENRTFVQLALSLMATYGLYLISSLLYFEPWHMLTSFVQYLLLLPSYVNILLIYAMCNLHDVSWGTKGDNGSSKDLGAAKKVEKDGKEMAEVALPTKQEDVEALWQQARQELRVPVKEKAEKRSPETKRADEDRNFRTNVVLLFLGSNMLIILLFTSSTFTNWVNSHFVDATSSTFNPYLTVIFYAVLGLSALRFAGCLLYLIFRMFGY.

A compositionally biased stretch (basic and acidic residues) spans 1–13 (MAYHYSHDSDRRQ). The disordered stretch occupies residues 1–132 (MAYHYSHDSD…PSHTDYSDED (132 aa)). Residues 18–33 (YNYPSNYSNPSQYSIP) are compositionally biased toward low complexity. N23 carries N-linked (GlcNAc...) asparagine glycosylation. Residues 71 to 80 (PQPTASSMTS) show a composition bias toward polar residues. N587 is a glycosylation site (N-linked (GlcNAc...) asparagine). 4 helical membrane passes run 590-610 (IFAA…GHGI), 625-645 (FNLL…FFLI), 663-683 (IFQV…VCSL), and 696-716 (FCIF…GWTV). The N-linked (GlcNAc...) asparagine glycan is linked to N736. Helical transmembrane passes span 739–759 (FVQL…SSLL) and 770–790 (FVQY…YAMC). The N-linked (GlcNAc...) asparagine glycan is linked to N803. Transmembrane regions (helical) follow at residues 873–893 (VVLL…SSTF) and 916–936 (IFYA…LYLI).

The protein belongs to the chitin synthase family. Class III subfamily.

The protein localises to the cell membrane. The enzyme catalyses [(1-&gt;4)-N-acetyl-beta-D-glucosaminyl](n) + UDP-N-acetyl-alpha-D-glucosamine = [(1-&gt;4)-N-acetyl-beta-D-glucosaminyl](n+1) + UDP + H(+). Its function is as follows. Polymerizes chitin, a structural polymer of the cell wall and septum, by transferring the sugar moiety of UDP-GlcNAc to the non-reducing end of the growing chitin polymer. The polypeptide is Chitin synthase 2 (Cryptococcus neoformans var. grubii serotype A (strain H99 / ATCC 208821 / CBS 10515 / FGSC 9487) (Filobasidiella neoformans var. grubii)).